A 283-amino-acid chain; its full sequence is Digeranylgeranylglyceryl phosphate synthase (283 aa).

The next 8 membrane-spanning stretches (helical) occupy residues 21 to 41 (ITAS…EIDI), 45 to 65 (LLVF…NDIF), 97 to 117 (LILG…IAVI), 135 to 155 (IGNF…GVAG), 158 to 178 (VMPV…REIV), 204 to 224 (LYFA…PYIL), 226 to 246 (IFGI…IYAM), and 261 to 281 (VSKF…VGAI).

The protein belongs to the UbiA prenyltransferase family. DGGGP synthase subfamily. Requires Mg(2+) as cofactor.

Its subcellular location is the cell membrane. The enzyme catalyses sn-3-O-(geranylgeranyl)glycerol 1-phosphate + (2E,6E,10E)-geranylgeranyl diphosphate = 2,3-bis-O-(geranylgeranyl)-sn-glycerol 1-phosphate + diphosphate. Its pathway is membrane lipid metabolism; glycerophospholipid metabolism. Functionally, prenyltransferase that catalyzes the transfer of the geranylgeranyl moiety of geranylgeranyl diphosphate (GGPP) to the C2 hydroxyl of (S)-3-O-geranylgeranylglyceryl phosphate (GGGP). This reaction is the second ether-bond-formation step in the biosynthesis of archaeal membrane lipids. In Methanocaldococcus jannaschii (strain ATCC 43067 / DSM 2661 / JAL-1 / JCM 10045 / NBRC 100440) (Methanococcus jannaschii), this protein is Digeranylgeranylglyceryl phosphate synthase.